The chain runs to 254 residues: Probable triosephosphate isomerase 2 (254 aa).

Position 9 to 11 (9 to 11 (NMK)) interacts with substrate. H96 serves as the catalytic Electrophile. The Proton acceptor role is filled by E168. G174 and S212 together coordinate substrate.

It belongs to the triosephosphate isomerase family. Homodimer.

It localises to the cytoplasm. It carries out the reaction D-glyceraldehyde 3-phosphate = dihydroxyacetone phosphate. It functions in the pathway carbohydrate biosynthesis; gluconeogenesis. It participates in carbohydrate degradation; glycolysis; D-glyceraldehyde 3-phosphate from glycerone phosphate: step 1/1. Involved in the gluconeogenesis. Catalyzes stereospecifically the conversion of dihydroxyacetone phosphate (DHAP) to D-glyceraldehyde-3-phosphate (G3P). This chain is Probable triosephosphate isomerase 2, found in Listeria monocytogenes serovar 1/2a (strain ATCC BAA-679 / EGD-e).